A 143-amino-acid chain; its full sequence is Beta/delta-urticatoxin-Uf2b (143 aa).

An N-terminal signal peptide occupies residues 1 to 18 (MGAIVLVALMALVASSSA). A propeptide spanning residues 19-80 (FSDIEHNIMK…MMLSGRPQPN (62 aa)) is cleaved from the precursor. 6 disulfide bridges follow: Cys-83-Cys-100, Cys-90-Cys-105, Cys-99-Cys-113, Cys-115-Cys-129, Cys-122-Cys-134, and Cys-128-Cys-142.

Belongs to the urticatoxin-2 family. As to expression, expressed in trichomes, that are stiff epidermal hairs located on the surface of petioles and leaves.

The protein resides in the secreted. Its function is as follows. Plant defense neurotoxin that causes pain and systemic symptoms in mammals via modulation of voltage-gated sodium channels (Nav). Potent modulator of human Nav1.5/SCN5A (EC(50)=55 nM), Nav1.6/SCN8A (EC(50)=0.86 nM), and Nav1.7/SCN9A (EC(50)=208 nM), where it shifts the activation threshold to more negative potentials and delays fast inactivation. Also shifts the voltage-dependence of steady-state fast inactivation of Nav1.6/SCN8A, but not that of Nav1.5/SCN5A or Nav1.7/SCN9A. On Nav1.7/SCN9A, principally acts by binding to extracellular loops of domain IV (Nav site 3). In vivo, intraplantar injection into mice causes numerous dose-dependent, immediate, and long-lasting spontaneous pain behaviors, while no swelling is observed in the injected paw. At the highest doses tested, systemic symptoms including hypokinesia and hypersalivation are observed. The protein is Beta/delta-urticatoxin-Uf2b of Urtica ferox (Tree nettle).